Here is a 951-residue protein sequence, read N- to C-terminus: Coiled-coil and C2 domain-containing protein 1A (951 aa).

4 disordered regions span residues 80–139 (CMRD…LETT), 185–266 (AIDE…RQRD), 306–346 (VDLS…PPPR), and 437–491 (NQDE…TRAQ). Over residues 84–104 (PDEDEEEGTDEDDLEADDDLL) the composition is skewed to acidic residues. Residues T92, T204, and T206 each carry the phosphothreonine modification. A compositionally biased stretch (low complexity) spans 201-210 (PASTPTYSPA). S208 is modified (phosphoserine; by CDK1). A phosphoserine mark is found at S253 and S324. The span at 311 to 333 (LPPPPDQLPPDPPSPPSQPPTPA) shows a compositional bias: pro residues. Residues 346 to 392 (RTLLEALEQRMERYQVAAAQAKSKGDQRKARMHERIVKQYQDAIRAH) adopt a coiled-coil conformation. S455 carries the phosphoserine modification. Low complexity predominate over residues 475-488 (SAPTAKAPPKATST). Residues 484 to 517 (KATSTRAQQQLAFLEGRKKQLLQAALRAKQKNDV) are a coiled coil. A C2 domain is found at 637 to 771 (RFEQRTFSVI…EIACEVREIL (135 aa)). A disordered region spans residues 818-841 (TQVAGPKGKAPPVPAPARESGNRS).

The protein belongs to the CC2D1 family. In terms of processing, phosphorylation on Ser-208 by CDK1 promotes spindle pole localization and association with SCC1/RAD21.

The protein resides in the cytoplasm. Its subcellular location is the nucleus. It is found in the cytoskeleton. It localises to the microtubule organizing center. The protein localises to the centrosome. Transcription factor that binds specifically to the DRE (dual repressor element) and represses HTR1A gene transcription in neuronal cells. The combination of calcium and ATP specifically inactivates the binding with FRE. May play a role in the altered regulation of HTR1A associated with anxiety and major depression. Mediates HDAC-independent repression of HTR1A promoter in neuronal cell. Performs essential function in controlling functional maturation of synapses. Plays distinct roles depending on its localization. When cytoplasmic, acts as a scaffold protein in the PI3K/PDK1/AKT pathway. Repressor of HTR1A when nuclear. In the centrosome, regulates spindle pole localization of the cohesin subunit SCC1/RAD21, thereby mediating centriole cohesion during mitosis. In Homo sapiens (Human), this protein is Coiled-coil and C2 domain-containing protein 1A (CC2D1A).